A 122-amino-acid polypeptide reads, in one-letter code: MARIAGVNIPTNKRVLIALQYIHGIGQKNAAEIIEKVKIPVDRRVNQLSDAEVLQIREVIDRDYLVEGDLRRETGMNIKRLMDLGCYRGLRHRRGLPVRGQRTHTNARTRKGPAKAIAGKKK.

A disordered region spans residues 99-122 (RGQRTHTNARTRKGPAKAIAGKKK).

It belongs to the universal ribosomal protein uS13 family. In terms of assembly, part of the 30S ribosomal subunit. Forms a loose heterodimer with protein S19. Forms two bridges to the 50S subunit in the 70S ribosome.

Located at the top of the head of the 30S subunit, it contacts several helices of the 16S rRNA. In the 70S ribosome it contacts the 23S rRNA (bridge B1a) and protein L5 of the 50S subunit (bridge B1b), connecting the 2 subunits; these bridges are implicated in subunit movement. Contacts the tRNAs in the A and P-sites. This is Small ribosomal subunit protein uS13 from Rhodopseudomonas palustris (strain HaA2).